The primary structure comprises 174 residues: NADH-quinone oxidoreductase subunit B 2 (174 aa).

[4Fe-4S] cluster is bound by residues Cys-53, Cys-54, Cys-118, and Cys-148.

This sequence belongs to the complex I 20 kDa subunit family. NDH-1 is composed of 14 different subunits. Subunits NuoB, C, D, E, F, and G constitute the peripheral sector of the complex. The cofactor is [4Fe-4S] cluster.

Its subcellular location is the cell inner membrane. The enzyme catalyses a quinone + NADH + 5 H(+)(in) = a quinol + NAD(+) + 4 H(+)(out). Its function is as follows. NDH-1 shuttles electrons from NADH, via FMN and iron-sulfur (Fe-S) centers, to quinones in the respiratory chain. Couples the redox reaction to proton translocation (for every two electrons transferred, four hydrogen ions are translocated across the cytoplasmic membrane), and thus conserves the redox energy in a proton gradient. The protein is NADH-quinone oxidoreductase subunit B 2 of Cereibacter sphaeroides (strain ATCC 17025 / ATH 2.4.3) (Rhodobacter sphaeroides).